The sequence spans 381 residues: Chaperone protein DnaJ (381 aa).

A J domain is found at 5-70; it reads DFYEVLGVGR…QKKAAYDQYG (66 aa). The segment at 136-214 adopts a CR-type zinc-finger fold; it reads GVSKEIEVPT…CHGQGRKQKT (79 aa). Cys-149, Cys-152, Cys-166, Cys-169, Cys-188, Cys-191, Cys-202, and Cys-205 together coordinate Zn(2+). CXXCXGXG motif repeat units lie at residues 149–156, 166–173, 188–195, and 202–209; these read CDTCDGSG, CGTCHGHG, CPTCHGKG, and CNECHGQG.

It belongs to the DnaJ family. Homodimer. Zn(2+) serves as cofactor.

Its subcellular location is the cytoplasm. Functionally, participates actively in the response to hyperosmotic and heat shock by preventing the aggregation of stress-denatured proteins and by disaggregating proteins, also in an autonomous, DnaK-independent fashion. Unfolded proteins bind initially to DnaJ; upon interaction with the DnaJ-bound protein, DnaK hydrolyzes its bound ATP, resulting in the formation of a stable complex. GrpE releases ADP from DnaK; ATP binding to DnaK triggers the release of the substrate protein, thus completing the reaction cycle. Several rounds of ATP-dependent interactions between DnaJ, DnaK and GrpE are required for fully efficient folding. Also involved, together with DnaK and GrpE, in the DNA replication of plasmids through activation of initiation proteins. This Vibrio campbellii (strain ATCC BAA-1116) protein is Chaperone protein DnaJ.